We begin with the raw amino-acid sequence, 540 residues long: Coiled-coil domain-containing protein 116 (540 aa).

The stretch at 79-102 forms a coiled coil; it reads QVLDSLQTVVEQATECVATMKTEA. Residues 347-400 are disordered; that stretch reads PGNSDLQPSSKASLPTDREARGETCYSPTSASSPKTSHRKSKDRRGSPSNAVQM. Composition is skewed to polar residues over residues 350–359 and 372–381; these read SDLQPSSKAS and YSPTSASSPK. Serine 393 bears the Phosphoserine mark.

It localises to the cytoplasm. The protein resides in the cytoskeleton. Its subcellular location is the microtubule organizing center. The protein localises to the centrosome. The protein is Coiled-coil domain-containing protein 116 (Ccdc116) of Rattus norvegicus (Rat).